The sequence spans 288 residues: 2-methoxy-6-polyprenyl-1,4-benzoquinol methylase, mitochondrial (288 aa).

Positions 68, 102, and 146 each coordinate S-adenosyl-L-methionine. The span at 260–270 (PITPTTSSDIP) shows a compositional bias: low complexity. The disordered stretch occupies residues 260-288 (PITPTTSSDIPAQNTSEATCEVKPEPNSA). Positions 279-288 (CEVKPEPNSA) are enriched in basic and acidic residues.

The protein belongs to the class I-like SAM-binding methyltransferase superfamily. MenG/UbiE family. In terms of assembly, component of a multi-subunit COQ enzyme complex.

It localises to the mitochondrion inner membrane. The catalysed reaction is a 2-methoxy-6-(all-trans-polyprenyl)benzene-1,4-diol + S-adenosyl-L-methionine = a 5-methoxy-2-methyl-3-(all-trans-polyprenyl)benzene-1,4-diol + S-adenosyl-L-homocysteine + H(+). The protein operates within cofactor biosynthesis; ubiquinone biosynthesis. In terms of biological role, methyltransferase required for the conversion of 2-polyprenyl-6-methoxy-1,4-benzoquinol (DDMQH2) to 2-polyprenyl-3-methyl-6-methoxy-1,4-benzoquinol (DMQH2). This chain is 2-methoxy-6-polyprenyl-1,4-benzoquinol methylase, mitochondrial, found in Leishmania donovani.